The chain runs to 400 residues: Acyl-CoA dehydrogenase FadE26 (400 aa).

FAD is bound by residues 127 to 130 (IGYS), T136, and S162. Residue E247 is the Proton acceptor of the active site. FAD is bound at residue 380 to 382 (TNE).

This sequence belongs to the acyl-CoA dehydrogenase family. In terms of assembly, heterotetramer (dimer of heterodimers) composed of FadE26 and FadE27. FAD is required as a cofactor.

The enzyme catalyses (25S)-3-oxocholest-4-en-26-oyl-CoA + A = 3-oxo-cholest-4,24-dien-26-oyl-CoA + AH2. It functions in the pathway steroid metabolism; cholesterol degradation. With respect to regulation, uncompetitively inhibited by high concentration of 3-OCS-CoA. Its function is as follows. Involved in the first cycle of side chain dehydrogenation in the beta-oxidation of cholesterol catabolism. It contributes partly to the virulence by increasing the efficiency of beta-oxidation. Catalyzes the dehydrogenation of acyl-CoA ester side chains of (25S)-3-oxo-cholest-4-en-26-oyl-CoA (3-OCS-CoA) to yield (24E)-3-oxo-cholest-4,24-dien-26-oyl-CoA. Also able to dehydrogenate steroyl-CoA such as 3-oxo-chol-4-en-24-oyl-CoA (3-OCO-CoA) as well as 3-oxo-4-pregnene-20-carboxyl-CoA (3-OPC-CoA). It dehydrogenates only (25S)-OCS-CoA diastereomer. This is Acyl-CoA dehydrogenase FadE26 (fadE26) from Mycobacterium tuberculosis (strain ATCC 25618 / H37Rv).